The sequence spans 145 residues: Large ribosomal subunit protein uL16 (145 aa).

The segment covering 1 to 17 (MLMPKRVKHRRVHRGRM) has biased composition (basic residues). The segment at 1 to 22 (MLMPKRVKHRRVHRGRMTGKAT) is disordered.

This sequence belongs to the universal ribosomal protein uL16 family. Part of the 50S ribosomal subunit.

Functionally, binds 23S rRNA and is also seen to make contacts with the A and possibly P site tRNAs. The chain is Large ribosomal subunit protein uL16 from Ruminiclostridium cellulolyticum (strain ATCC 35319 / DSM 5812 / JCM 6584 / H10) (Clostridium cellulolyticum).